A 72-amino-acid polypeptide reads, in one-letter code: Small ribosomal subunit protein bS20 (72 aa).

Belongs to the bacterial ribosomal protein bS20 family.

Its function is as follows. Binds directly to 16S ribosomal RNA. The protein is Small ribosomal subunit protein bS20 (rpsT) of Proteus mirabilis.